We begin with the raw amino-acid sequence, 289 residues long: Phosphatidylserine decarboxylase proenzyme (289 aa).

Residues D92, H149, and S254 each act as charge relay system; for autoendoproteolytic cleavage activity in the active site. The Schiff-base intermediate with substrate; via pyruvic acid; for decarboxylase activity role is filled by S254. S254 carries the pyruvic acid (Ser); by autocatalysis modification.

The protein belongs to the phosphatidylserine decarboxylase family. PSD-B subfamily. Prokaryotic type I sub-subfamily. As to quaternary structure, heterodimer of a large membrane-associated beta subunit and a small pyruvoyl-containing alpha subunit. Pyruvate is required as a cofactor. Post-translationally, is synthesized initially as an inactive proenzyme. Formation of the active enzyme involves a self-maturation process in which the active site pyruvoyl group is generated from an internal serine residue via an autocatalytic post-translational modification. Two non-identical subunits are generated from the proenzyme in this reaction, and the pyruvate is formed at the N-terminus of the alpha chain, which is derived from the carboxyl end of the proenzyme. The autoendoproteolytic cleavage occurs by a canonical serine protease mechanism, in which the side chain hydroxyl group of the serine supplies its oxygen atom to form the C-terminus of the beta chain, while the remainder of the serine residue undergoes an oxidative deamination to produce ammonia and the pyruvoyl prosthetic group on the alpha chain. During this reaction, the Ser that is part of the protease active site of the proenzyme becomes the pyruvoyl prosthetic group, which constitutes an essential element of the active site of the mature decarboxylase.

The protein localises to the cell membrane. It catalyses the reaction a 1,2-diacyl-sn-glycero-3-phospho-L-serine + H(+) = a 1,2-diacyl-sn-glycero-3-phosphoethanolamine + CO2. It participates in phospholipid metabolism; phosphatidylethanolamine biosynthesis; phosphatidylethanolamine from CDP-diacylglycerol: step 2/2. Its function is as follows. Catalyzes the formation of phosphatidylethanolamine (PtdEtn) from phosphatidylserine (PtdSer). The sequence is that of Phosphatidylserine decarboxylase proenzyme from Pseudomonas aeruginosa (strain UCBPP-PA14).